We begin with the raw amino-acid sequence, 275 residues long: Formamidopyrimidine-DNA glycosylase (275 aa).

Pro-2 functions as the Schiff-base intermediate with DNA in the catalytic mechanism. Glu-3 acts as the Proton donor in catalysis. The active-site Proton donor; for beta-elimination activity is Lys-59. Positions 92, 111, and 155 each coordinate DNA. Residues Asn-240–Arg-274 form an FPG-type zinc finger. Residue Arg-264 is the Proton donor; for delta-elimination activity of the active site.

This sequence belongs to the FPG family. As to quaternary structure, monomer. It depends on Zn(2+) as a cofactor.

It carries out the reaction Hydrolysis of DNA containing ring-opened 7-methylguanine residues, releasing 2,6-diamino-4-hydroxy-5-(N-methyl)formamidopyrimidine.. The enzyme catalyses 2'-deoxyribonucleotide-(2'-deoxyribose 5'-phosphate)-2'-deoxyribonucleotide-DNA = a 3'-end 2'-deoxyribonucleotide-(2,3-dehydro-2,3-deoxyribose 5'-phosphate)-DNA + a 5'-end 5'-phospho-2'-deoxyribonucleoside-DNA + H(+). Functionally, involved in base excision repair of DNA damaged by oxidation or by mutagenic agents. Acts as a DNA glycosylase that recognizes and removes damaged bases. Has a preference for oxidized purines, such as 7,8-dihydro-8-oxoguanine (8-oxoG). Has AP (apurinic/apyrimidinic) lyase activity and introduces nicks in the DNA strand. Cleaves the DNA backbone by beta-delta elimination to generate a single-strand break at the site of the removed base with both 3'- and 5'-phosphates. The protein is Formamidopyrimidine-DNA glycosylase of Magnetococcus marinus (strain ATCC BAA-1437 / JCM 17883 / MC-1).